A 448-amino-acid polypeptide reads, in one-letter code: tRNA(Ile)-lysidine synthase (448 aa).

25 to 30 contributes to the ATP binding site; it reads SGGSDS.

Belongs to the tRNA(Ile)-lysidine synthase family.

The protein resides in the cytoplasm. It carries out the reaction cytidine(34) in tRNA(Ile2) + L-lysine + ATP = lysidine(34) in tRNA(Ile2) + AMP + diphosphate + H(+). Ligates lysine onto the cytidine present at position 34 of the AUA codon-specific tRNA(Ile) that contains the anticodon CAU, in an ATP-dependent manner. Cytidine is converted to lysidine, thus changing the amino acid specificity of the tRNA from methionine to isoleucine. This Brucella abortus (strain S19) protein is tRNA(Ile)-lysidine synthase.